We begin with the raw amino-acid sequence, 174 residues long: RNA pyrophosphohydrolase (174 aa).

The Nudix hydrolase domain maps to 6–149; that stretch reads GFRANVGIII…KRDVYRKVMK (144 aa). Residues 38–59 carry the Nudix box motif; the sequence is GGVDDGESAEEAMYRELYEEVG.

This sequence belongs to the Nudix hydrolase family. RppH subfamily. It depends on a divalent metal cation as a cofactor.

Its function is as follows. Accelerates the degradation of transcripts by removing pyrophosphate from the 5'-end of triphosphorylated RNA, leading to a more labile monophosphorylated state that can stimulate subsequent ribonuclease cleavage. The chain is RNA pyrophosphohydrolase from Shewanella sp. (strain ANA-3).